The primary structure comprises 443 residues: UDP-N-acetylmuramate--L-alanine ligase (443 aa).

110-116 (GAHGKTS) contacts ATP.

The protein belongs to the MurCDEF family.

It is found in the cytoplasm. The enzyme catalyses UDP-N-acetyl-alpha-D-muramate + L-alanine + ATP = UDP-N-acetyl-alpha-D-muramoyl-L-alanine + ADP + phosphate + H(+). It functions in the pathway cell wall biogenesis; peptidoglycan biosynthesis. Functionally, cell wall formation. This chain is UDP-N-acetylmuramate--L-alanine ligase, found in Streptococcus equi subsp. equi (strain 4047).